A 439-amino-acid polypeptide reads, in one-letter code: Type 3 secretion system ATPase (439 aa).

Residue 172 to 177 (GGGKST) participates in ATP binding.

The protein belongs to the ATPase alpha/beta chains family. T3SS ATPase subfamily. As to quaternary structure, the core secretion machinery of the T3SS is composed of approximately 20 different proteins, including cytoplasmic components, a base, an export apparatus and a needle. This subunit is part of the cytosolic complex. Forms homohexamers.

It localises to the cytoplasm. The catalysed reaction is ATP + H2O + cellular proteinSide 1 = ADP + phosphate + cellular proteinSide 2.. In terms of biological role, ATPase component of the type III secretion system (T3SS), also called injectisome, which is used to inject bacterial effector proteins into eukaryotic host cells. Acts as a molecular motor to provide the energy that is required for the export of proteins. Required for type III secretion apparatus (T3SA) formation, proper protein secretion, host cell invasion and virulence. May play a critical role in T3SS substrate recognition, disassembly of the effector/chaperone complex and unfolding of the effector in an ATP-dependent manner prior to secretion. In Yersinia pseudotuberculosis serotype I (strain IP32953), this protein is Type 3 secretion system ATPase.